Here is a 253-residue protein sequence, read N- to C-terminus: MGEFNEKKATCGTVCLKYLLFTYNCCFWLAGLAVMAVGIWTLALKSDYISLLASSTYLATAYILVVAGVVVMVTGVLGCCATFKERRNLLRLYFILLLIIFLLEIIAGILAYVYYQQLNTELKENLKDTMIKRYHQSGHEGVTNAVDKLQQEFHCCGSNNSRDWRDSEWIRSGEADSRVVPDSCCKTVVTGCGKREHASNIYKVEGGCITKLESFIQEHLRVIGAVGIGIACVQVFGMIFTCCLYRSLKLEHY.

The Cytoplasmic portion of the chain corresponds to 1 to 18; the sequence is MGEFNEKKATCGTVCLKY. 2 S-palmitoyl cysteine lipidation sites follow: cysteine 11 and cysteine 15. The helical transmembrane segment at 19 to 39 threads the bilayer; sequence LLFTYNCCFWLAGLAVMAVGI. At 40 to 57 the chain is on the extracellular side; the sequence is WTLALKSDYISLLASSTY. A helical transmembrane segment spans residues 58–78; sequence LATAYILVVAGVVVMVTGVLG. Over 79 to 91 the chain is Cytoplasmic; sequence CCATFKERRNLLR. Residues 92–112 form a helical membrane-spanning segment; it reads LYFILLLIIFLLEIIAGILAY. Topologically, residues 113–221 are extracellular; sequence VYYQQLNTEL…LESFIQEHLR (109 aa). Residue asparagine 159 is glycosylated (N-linked (GlcNAc...) asparagine). The helical transmembrane segment at 222–242 threads the bilayer; it reads VIGAVGIGIACVQVFGMIFTC. S-palmitoyl cysteine attachment occurs at residues cysteine 242 and cysteine 243. The Cytoplasmic portion of the chain corresponds to 243–253; it reads CLYRSLKLEHY.

Belongs to the tetraspanin (TM4SF) family. Interacts with integrins ITGA3:ITGB1, ITGA5:ITGB1, ITGA3:ITGB1 and ITGA6:ITGB4 and with CD9 and CD181. Interacts (via the second extracellular domain) with integrin ITGAV:ITGB3. Interacts with ITGA3; this interaction modulates ITGA3 glycosylation pattern. Interacts with F11R. Interacts with RAC1 and CDC42; these interactions mediate physical association of RAC1 and CDC42 with integrin adhesion receptor complexes. In terms of processing, palmitoylated. Palmitoylation by ZDHHC2 regulates CD151 expression, association with other tetraspanin family proteins and function in cell adhesion. Post-translationally, ubiquitinated by RNF128 on lysine residues present in the tetraspanin amino terminus via 'Lys-48'-linked ubiquitin leading to proteasomal degradation.

The protein localises to the cell membrane. Structural component of specialized membrane microdomains known as tetraspanin-enriched microdomains (TERMs), which act as platforms for receptor clustering and signaling. Plays a role in various cellular and molecular mechanism through its association with both integrin and non-integrin proteins. These interactions facilitate critical cellular functions, including cell-to-cell communication, wound healing, platelet aggregation, trafficking, cell motility, and angiogenesis. Via interaction with JAM-A/F11R and integrin ITGA3:ITGB1, promotes the recruitment of signaling molecules such as RAC1, CDC42 and RhoGTPases to facilitate the polarization of epithelial cells and the reorganization of the actin cytoskeleton, which are critical steps in cell migration process. Regulates the glycosylation pattern of ITGA3:ITGB1 thereby modulating its activity. Plays an essential role in the maintenance of central laminin-binding integrin ITGA6:ITGB4-containing adhesion complexes. Essential for the proper assembly of the glomerular and tubular basement membranes in kidney. Contributes to T-cell activation by modulating integrin signaling leading to activation of downstream targets PTK2 and MAPK1/MAPK3. In Rattus norvegicus (Rat), this protein is CD151 antigen (Cd151).